The primary structure comprises 1010 residues: BrkA autotransporter (1010 aa).

The N-terminal stretch at 1 to 42 (MYLDRFRQCPSSLQIPRSAWRLHALAAALALAGMARLAPAAA) is a signal peptide. The Autotransporter domain maps to 742–1010 (LRADAGGPWA…SFHAGYRYSF (269 aa)).

It is found in the periplasm. The protein localises to the secreted. It localises to the cell surface. The protein resides in the cell outer membrane. In terms of biological role, inhibits the classical pathway of complement activation and prevents accumulation of deposited C4. The sequence is that of BrkA autotransporter from Bordetella pertussis (strain Tohama I / ATCC BAA-589 / NCTC 13251).